A 304-amino-acid chain; its full sequence is UDP-3-O-acyl-N-acetylglucosamine deacetylase (304 aa).

Zn(2+)-binding residues include H78, H237, and D241. Residue H264 is the Proton donor of the active site.

Belongs to the LpxC family. Zn(2+) is required as a cofactor.

It catalyses the reaction a UDP-3-O-[(3R)-3-hydroxyacyl]-N-acetyl-alpha-D-glucosamine + H2O = a UDP-3-O-[(3R)-3-hydroxyacyl]-alpha-D-glucosamine + acetate. It functions in the pathway glycolipid biosynthesis; lipid IV(A) biosynthesis; lipid IV(A) from (3R)-3-hydroxytetradecanoyl-[acyl-carrier-protein] and UDP-N-acetyl-alpha-D-glucosamine: step 2/6. Its function is as follows. Catalyzes the hydrolysis of UDP-3-O-myristoyl-N-acetylglucosamine to form UDP-3-O-myristoylglucosamine and acetate, the committed step in lipid A biosynthesis. In Alcanivorax borkumensis (strain ATCC 700651 / DSM 11573 / NCIMB 13689 / SK2), this protein is UDP-3-O-acyl-N-acetylglucosamine deacetylase.